We begin with the raw amino-acid sequence, 553 residues long: MAFSELLDLVGGLGRFQVLQTMALMVSIMWLCTQSMLENFSAAVPSHRCWAPLLDNSTAQASILGSLSPEALLAISIPPGPNQRPHQCRRFRQPQWQLLDPNATATSWSEADTEPCVDGWVYDRSIFTSTIVAKWNLVCDSHALKPMAQSIYLAGILVGAAACGPASDRFGRRLVLTWSYLQMAVMGTAAAFAPAFPVYCLFRFLLAFAVAGVMMNTGTLLMEWTAARARPLVMTLNSLGFSFGHGLTAAVAYGVRDWTLLQLVVSVPFFLCFLYSWWLAESARWLLTTGRLDWGLQELWRVAAINGKGAVQDTLTPEVLLSAMREELSMGQPPASLGTLLRMPGLRFRTCISTLCWFAFGFTFFGLALDLQALGSNIFLLQMFIGVVDIPAKMGALLLLSHLGRRPTLAASLLLAGLCILANTLVPHEMGALRSALAVLGLGGVGAAFTCITIYSSELFPTVLRMTAVGLGQMAARGGAILGPLVRLLGVHGPWLPLLVYGTVPVLSGLAALLLPETQSLPLPDTIQDVQNQAVKKATHGTLGNSVLKSTQF.

Residues 9–29 (LVGGLGRFQVLQTMALMVSIM) form a helical membrane-spanning segment. 2 N-linked (GlcNAc...) asparagine glycosylation sites follow: asparagine 56 and asparagine 102. Helical transmembrane passes span 146–166 (PMAQ…CGPA), 174–194 (LVLT…AFAP), 195–215 (AFPV…GVMM), 232–252 (LVMT…AAVA), 260–280 (LLQL…WWLA), 351–371 (CIST…ALDL), 378–398 (IFLL…GALL), 407–427 (PTLA…TLVP), 435–455 (SALA…ITIY), 466–486 (MTAV…GPLV), and 495–515 (WLPL…ALLL). Threonine 542 carries the phosphothreonine modification.

This sequence belongs to the major facilitator (TC 2.A.1) superfamily. Organic cation transporter (TC 2.A.1.19) family. As to quaternary structure, interacts with PDZK1. In terms of processing, N-glycosylated. In terms of tissue distribution, detected in kidney (at protein level). Detected in fetal and adult kidney. Detected in epithelial cells of proximal tubules in renal cortex.

Its subcellular location is the apical cell membrane. The enzyme catalyses urate(out) + (S)-lactate(in) = urate(in) + (S)-lactate(out). It catalyses the reaction nicotinate(in) + urate(out) = nicotinate(out) + urate(in). The catalysed reaction is urate(out) + n chloride(in) = urate(in) + n chloride(out). It carries out the reaction orotate(out) + nicotinate(in) = orotate(in) + nicotinate(out). Electroneutral antiporter that translocates urate across the apical membrane of proximal tubular cells in exchange for monovalent organic or inorganic anions. Involved in renal reabsorption of urate and helps maintaining blood levels of uric acid. Mediates urate uptake by an exchange with organic anions such as (S)-lactate and nicotinate, and inorganic anion Cl(-). Other inorganic anions such as Br(-), I(-) and NO3(-) may also act as counteranions that exchange for urate. Also mediates orotate tubular uptake coupled with nicotinate efflux and to a lesser extent with lactate efflux, therefore displaying a potential role in orotate renal reabsorption. Orotate transport is Cl(-)-dependent. The chain is Solute carrier family 22 member 12 from Homo sapiens (Human).